The sequence spans 621 residues: 1-deoxy-D-xylulose-5-phosphate synthase (621 aa).

Thiamine diphosphate-binding positions include H80 and 121–123; that span reads GHS. Mg(2+) is bound at residue D152. Thiamine diphosphate contacts are provided by residues 153–154, N181, Y288, and E370; that span reads GA. Residue N181 coordinates Mg(2+).

The protein belongs to the transketolase family. DXPS subfamily. As to quaternary structure, homodimer. It depends on Mg(2+) as a cofactor. Thiamine diphosphate serves as cofactor.

The catalysed reaction is D-glyceraldehyde 3-phosphate + pyruvate + H(+) = 1-deoxy-D-xylulose 5-phosphate + CO2. It participates in metabolic intermediate biosynthesis; 1-deoxy-D-xylulose 5-phosphate biosynthesis; 1-deoxy-D-xylulose 5-phosphate from D-glyceraldehyde 3-phosphate and pyruvate: step 1/1. In terms of biological role, catalyzes the acyloin condensation reaction between C atoms 2 and 3 of pyruvate and glyceraldehyde 3-phosphate to yield 1-deoxy-D-xylulose-5-phosphate (DXP). The polypeptide is 1-deoxy-D-xylulose-5-phosphate synthase (Edwardsiella ictaluri (strain 93-146)).